The sequence spans 392 residues: Streptogrisin-D (392 aa).

Positions 1 to 64 (MCVSRRRNSG…AGFTFQTANA (64 aa)) are cleaved as a signal peptide. Residues 65 to 204 (SDDVPAFGAK…NRTAGEFTPL (140 aa)) constitute a propeptide that is removed on maturation. An intrachain disulfide couples Cys-218 to Cys-238. Residues His-237, Asp-266, and Ser-348 each act as charge relay system in the active site. Cys-342 and Cys-369 form a disulfide bridge.

Belongs to the peptidase S1 family. In terms of assembly, homodimer.

In terms of biological role, has a primary specificity for large aliphatic or aromatic amino acids. The protein is Streptogrisin-D (sprD) of Streptomyces griseus.